We begin with the raw amino-acid sequence, 343 residues long: Delta(1)-pyrroline-2-carboxylate/Delta(1)-piperideine-2-carboxylate reductase (343 aa).

S53 functions as the Charge relay system in the catalytic mechanism. The Proton donor role is filled by H54. R58 is a binding site for substrate. 126-130 lines the NADP(+) pocket; that stretch reads HFAAL. Substrate is bound at residue T166. 184-186 is a binding site for NADP(+); it reads DLA. Substrate is bound at residue 192 to 193; the sequence is HG. Residue D194 is the Charge relay system of the active site. Residues 236–237 and 309–315 contribute to the NADP(+) site; these read HK and RLPGDRR.

Belongs to the LDH2/MDH2 oxidoreductase family. As to quaternary structure, homodimer.

The enzyme catalyses L-pipecolate + NADP(+) = Delta(1)-piperideine-2-carboxylate + NADPH + H(+). The catalysed reaction is L-proline + NADP(+) = 1-pyrroline-2-carboxylate + NADPH + H(+). It catalyses the reaction N-methyl-L-alanine + NADP(+) + H2O = methylamine + pyruvate + NADPH + H(+). Its activity is regulated as follows. Is inhibited by the substrate analog pyrrole-2-carboxylate, and by 2-picolinate. Functionally, catalyzes the reduction of both Delta(1)-pyrroline-2-carboxylate (Pyr2C) and Delta(1)-piperideine-2-carboxylate (Pip2C) to L-proline and L-pipecolate, respectively, using NADPH as the electron donor. Can catalyze the reverse oxidation reactions, albeit at a much lower rate. Is also able to catalyze in vitro the NADPH-dependent formation of N-methylalanine from pyruvate and N-methylamine; can act on other alpha-keto acids and specifically uses methylamine and not ammonia for these reductive amination reactions. Can use NADH instead of NADPH, although with much less efficiency. The sequence is that of Delta(1)-pyrroline-2-carboxylate/Delta(1)-piperideine-2-carboxylate reductase from Pseudomonas syringae pv. tomato.